Reading from the N-terminus, the 455-residue chain is Kynurenine 3-monooxygenase (455 aa).

This sequence belongs to the aromatic-ring hydroxylase family. KMO subfamily. FAD is required as a cofactor.

The enzyme catalyses L-kynurenine + NADPH + O2 + H(+) = 3-hydroxy-L-kynurenine + NADP(+) + H2O. Its pathway is cofactor biosynthesis; NAD(+) biosynthesis; quinolinate from L-kynurenine: step 1/3. Functionally, catalyzes the hydroxylation of L-kynurenine (L-Kyn) to form 3-hydroxy-L-kynurenine (L-3OHKyn). Required for synthesis of quinolinic acid. The protein is Kynurenine 3-monooxygenase of Xanthomonas oryzae pv. oryzae (strain KACC10331 / KXO85).